The primary structure comprises 352 residues: UDP-N-acetylglucosamine--N-acetylmuramyl-(pentapeptide) pyrophosphoryl-undecaprenol N-acetylglucosamine transferase (352 aa).

UDP-N-acetyl-alpha-D-glucosamine is bound by residues 14 to 16, Asn-124, Arg-164, Ser-185, and Gln-285; that span reads TGG.

It belongs to the glycosyltransferase 28 family. MurG subfamily.

The protein localises to the cell inner membrane. It carries out the reaction di-trans,octa-cis-undecaprenyl diphospho-N-acetyl-alpha-D-muramoyl-L-alanyl-D-glutamyl-meso-2,6-diaminopimeloyl-D-alanyl-D-alanine + UDP-N-acetyl-alpha-D-glucosamine = di-trans,octa-cis-undecaprenyl diphospho-[N-acetyl-alpha-D-glucosaminyl-(1-&gt;4)]-N-acetyl-alpha-D-muramoyl-L-alanyl-D-glutamyl-meso-2,6-diaminopimeloyl-D-alanyl-D-alanine + UDP + H(+). Its pathway is cell wall biogenesis; peptidoglycan biosynthesis. Cell wall formation. Catalyzes the transfer of a GlcNAc subunit on undecaprenyl-pyrophosphoryl-MurNAc-pentapeptide (lipid intermediate I) to form undecaprenyl-pyrophosphoryl-MurNAc-(pentapeptide)GlcNAc (lipid intermediate II). In Chlamydia trachomatis serovar L2 (strain ATCC VR-902B / DSM 19102 / 434/Bu), this protein is UDP-N-acetylglucosamine--N-acetylmuramyl-(pentapeptide) pyrophosphoryl-undecaprenol N-acetylglucosamine transferase.